Here is a 279-residue protein sequence, read N- to C-terminus: uncharacterized protein (279 aa).

Residues 233 to 279 form a disordered region; the sequence is NDHQLHDSPLCSDVSDSTSNNNYDESLNFSNDNNNSSFNDFDDDNFI. The segment covering 246–259 has biased composition (polar residues); the sequence is VSDSTSNNNYDESL. Positions 260–271 are enriched in low complexity; the sequence is NFSNDNNNSSFN.

This is an uncharacterized protein from Buchnera aphidicola subsp. Baizongia pistaciae (strain Bp).